The following is a 426-amino-acid chain: Glutamate-1-semialdehyde 2,1-aminomutase (426 aa).

N6-(pyridoxal phosphate)lysine is present on Lys265.

It belongs to the class-III pyridoxal-phosphate-dependent aminotransferase family. HemL subfamily. As to quaternary structure, homodimer. Requires pyridoxal 5'-phosphate as cofactor.

Its subcellular location is the cytoplasm. The enzyme catalyses (S)-4-amino-5-oxopentanoate = 5-aminolevulinate. The protein operates within porphyrin-containing compound metabolism; protoporphyrin-IX biosynthesis; 5-aminolevulinate from L-glutamyl-tRNA(Glu): step 2/2. This is Glutamate-1-semialdehyde 2,1-aminomutase from Salmonella gallinarum (strain 287/91 / NCTC 13346).